Reading from the N-terminus, the 308-residue chain is uncharacterized protein (308 aa).

A signal peptide spans 1 to 28 (MILMKKFEIILFLFIAVLIFVFGYFVGA).

This is an uncharacterized protein from Methanocaldococcus jannaschii (strain ATCC 43067 / DSM 2661 / JAL-1 / JCM 10045 / NBRC 100440) (Methanococcus jannaschii).